Consider the following 178-residue polypeptide: Adenine phosphoribosyltransferase (178 aa).

It belongs to the purine/pyrimidine phosphoribosyltransferase family. Homodimer.

The protein localises to the cytoplasm. The enzyme catalyses AMP + diphosphate = 5-phospho-alpha-D-ribose 1-diphosphate + adenine. It participates in purine metabolism; AMP biosynthesis via salvage pathway; AMP from adenine: step 1/1. In terms of biological role, catalyzes a salvage reaction resulting in the formation of AMP, that is energically less costly than de novo synthesis. In Streptomyces clavuligerus, this protein is Adenine phosphoribosyltransferase.